We begin with the raw amino-acid sequence, 850 residues long: Transforming growth factor beta receptor type 3 (850 aa).

The first 22 residues, 1–22, serve as a signal peptide directing secretion; the sequence is MAVTSHHMVPVFVLMSACLATA. Over 23–785 the chain is Extracellular; it reads GPEPSTRCEL…QIFHGLDTLT (763 aa). Cysteine 54 and cysteine 199 are oxidised to a cystine. Residues asparagine 143 and asparagine 491 are each glycosylated (N-linked (GlcNAc...) asparagine). A ZP domain is found at 454-728; that stretch reads KCDNEKMVVA…PKCVTPDDAC (275 aa). The interval 528 to 557 is disordered; the sequence is SPGDSSGWPDGYEDLESGDNGFPGDTDEGE. Serine 533 and serine 544 each carry an O-linked (Xyl...) (glycosaminoglycan) serine glycan. Residues asparagine 570, asparagine 589, and asparagine 696 are each glycosylated (N-linked (GlcNAc...) asparagine). 3 disulfide bridges follow: cysteine 638–cysteine 704, cysteine 659–cysteine 728, and cysteine 709–cysteine 721. The interval 735–749 is interaction with TGF-beta ligand; it reads MIWTMMQNKKTFTKP. Residues 786-808 traverse the membrane as a helical segment; sequence VMGIAFAAFVIGALLTGALWYIY. Residues 809–850 lie on the Cytoplasmic side of the membrane; sequence SHTGETARRQQVPTSPPASENSSAAHSIGSTQSTPCSSSSTA. Over residues 817–833 the composition is skewed to polar residues; it reads RQQVPTSPPASENSSAA. Residues 817–850 are disordered; sequence RQQVPTSPPASENSSAAHSIGSTQSTPCSSSSTA. Positions 835-850 are enriched in low complexity; it reads SIGSTQSTPCSSSSTA. Position 839 is a phosphothreonine (threonine 839).

As to quaternary structure, forms homodimers and homooligomers. Interacts with DYNLT4. Interacts with integrin ITGA5:ITGB1; this interaction promotes the internalization and trafficking of ITGA5:ITGB1 into endocytic vesicles. Interacts with TGFB1, BMP2, BMP5, BMP7 or GDF5 and inhibin A via the ligand binding domains. Interacts with ALK3/BMPR1A; this interaction results in the cell surface retention of BMPR1A. Interacts with ALK6/BMPR1B; this interaction enhances BMPR1B-mediated stimulation of the BMP signaling pathway. Interacts with the scaffolding protein beta-arrestin2/ARRB2; this interaction mediates internalization of TGFBR3 and thus regulates migration, actin cytoskeleton and activation of CDC42. In terms of processing, extensively modified by glycosaminoglycan groups (GAG). Post-translationally, phosphorylated in the cytoplasmic domain by the type II receptor TGFBR2 at THR-839 to mediate recruitment of ARRB2 and subsequent internalization of TGFBR2 and TGFBR3.

The protein localises to the cell membrane. It localises to the secreted. The protein resides in the extracellular space. Its subcellular location is the extracellular matrix. Functionally, cell surface receptor that regulates diverse cellular processes including cell proliferation, differentiation, migration, and apoptosis. Initiates BMP, inhibin, and TGF-beta signaling pathways by interacting with different ligands including TGFB1, BMP2, BMP5, BMP7 or GDF5. Alternatively, acts as a cell surface coreceptor for BMP ligands, serving to enhance ligand binding by differentially regulating BMPR1A/ALK3 and BMPR1B/ALK6 receptor trafficking. Promotes epithelial cell adhesion, focal adhesion formation and integrin signaling during epithelial cell spreading on fibronectin. By interacting with the scaffolding protein beta-arrestin2/ARRB2, regulates migration or actin cytoskeleton and promotes the activation of CDC42 as well as the inhibition of NF-kappa-B. In gonadotrope cells, acts as an inhibin A coreceptor and regulates follicle-stimulating hormone (FSH) levels and female fertility. Plays a role in the inhibition of directed and random cell migration in epithelial cells by altering the actin cytoskeletal organization. Participates in epithelial-mesenchymal transformation (EMT) upon binding to BMP2 or TGFB2, by activating the PAR6/SMURF1/RHOA pathway. This is Transforming growth factor beta receptor type 3 (Tgfbr3) from Mus musculus (Mouse).